The primary structure comprises 484 residues: Iroquois-class homeodomain protein IRX-5 (484 aa).

A DNA-binding region (homeobox; TALE-type) is located at residues 112-174 (DPAYRKNATR…NARRRLKKEN (63 aa)). Disordered stretches follow at residues 176–393 (MTWT…QCPF) and 424–443 (GHPG…FNGL). The segment covering 185-202 (EDEEEEENIDLEKNDEDE) has biased composition (acidic residues). 2 stretches are compositionally biased toward basic and acidic residues: residues 203-212 (PQKPEDKGDL) and 249-265 (SDFK…ELPR). Phosphoserine is present on S273. Residues 318-328 (SPPPPPPPPPA) are compositionally biased toward pro residues. A compositionally biased stretch (low complexity) spans 375–389 (SRASPAPAPARSPSA). The residue at position 465 (S465) is a Phosphoserine.

Belongs to the TALE/IRO homeobox family. As to expression, not expressed in the developing metanephric kidney or adult kidney.

The protein localises to the nucleus. Its function is as follows. Establishes the cardiac repolarization gradient by its repressive actions on the KCND2 potassium-channel gene. Required for retinal cone bipolar cell differentiation. May regulate contrast adaptation in the retina and control specific aspects of visual function in circuits of the mammalian retina. Involved in craniofacial and gonadal development. Modulates the migration of progenitor cell populations in branchial arches and gonads by repressing CXCL12. This Mus musculus (Mouse) protein is Iroquois-class homeodomain protein IRX-5 (Irx5).